A 253-amino-acid polypeptide reads, in one-letter code: Complement C1q subcomponent subunit B (253 aa).

An N-terminal signal peptide occupies residues 1–25 (MKTQWGEVWTHLLLLLLGFLHVSWA). The residue at position 26 (Gln-26) is a Pyrrolidone carboxylic acid. The Collagen-like domain occupies 29 to 112 (CTGPPGIPGI…GPRGPKGDSG (84 aa)). Pro-33, Pro-36, Pro-39, Pro-51, and Pro-54 each carry 4-hydroxyproline. Residues 35 to 115 (IPGIPGVPGV…GPKGDSGDYG (81 aa)) form a disordered region. 5-hydroxylysine occurs at positions 57 and 60. Pro-63 bears the 4-hydroxyproline mark. Position 75 is a 5-hydroxylysine (Lys-75). Over residues 78–96 (PGIPGTPGKVGPKGPVGPK) the composition is skewed to low complexity. Pro-81 and Pro-84 each carry 4-hydroxyproline. Lys-90 and Lys-96 each carry 5-hydroxylysine. Pro-99 bears the 4-hydroxyproline mark. 5-hydroxylysine is present on Lys-108. The C1q domain maps to 115–253 (GATQKVAFSA…GFLLFPDMDA (139 aa)). Cys-179 and Cys-198 form a disulfide bridge. Positions 199, 200, and 206 each coordinate Ca(2+).

As to quaternary structure, core component of the complement C1 complex, a calcium-dependent complex composed of 1 molecule of the C1Q subcomplex, 2 molecules of C1R and 2 molecules of C1S. The C1Q subcomplex is composed 18 subunits: 3 chains of C1QA, C1QB, and C1QC trimerize to form 6 collagen-like triple helices connected to six globular ligand-recognition modules (C1q domain). Hydroxylated on lysine and proline residues. Hydroxylated lysine residues can be glycosylated. Mouse C1Q contains up to 64.0 hydroxylysine-galactosylglucose residues. Total percentage hydroxylysine residues glycosylated is 95.1%. Contains no hydroxylysine-monosaccharides. As to expression, highest expression in thioglycolate-activated peritoneal macrophages. Also found in spleen, thymus and heart. Very weak expression liver, kidney, lung and intestine.

The protein resides in the secreted. The protein localises to the cell surface. The C1Q subcomplex is inhibited by sulfated molecules, such as triterpenoid sulfates, heparan sulfate, or chondroitin sulfates. In terms of biological role, core component of the complement C1 complex, a multiprotein complex that initiates the classical pathway of the complement system, a cascade of proteins that leads to phagocytosis and breakdown of pathogens and signaling that strengthens the adaptive immune system. The classical complement pathway is initiated by the C1Q subcomplex of the C1 complex, which specifically binds IgG or IgM immunoglobulins complexed with antigens, forming antigen-antibody complexes on the surface of pathogens: C1QA, together with C1QB and C1QC, specifically recognizes and binds the Fc regions of IgG or IgM via its C1q domain. Immunoglobulin-binding activates the proenzyme C1R, which cleaves C1S, initiating the proteolytic cascade of the complement system. The C1Q subcomplex is activated by a hexamer of IgG complexed with antigens, while it is activated by a pentameric IgM. The C1Q subcomplex also recognizes and binds phosphatidylserine exposed on the surface of cells undergoing programmed cell death, possibly promoting activation of the complement system. This chain is Complement C1q subcomponent subunit B, found in Mus musculus (Mouse).